A 39-amino-acid chain; its full sequence is Photosystem II reaction center protein Psb30 (39 aa).

A helical membrane pass occupies residues I12–L32.

It belongs to the Psb30/Ycf12 family. As to quaternary structure, PSII is composed of 1 copy each of membrane proteins PsbA, PsbB, PsbC, PsbD, PsbE, PsbF, PsbH, PsbI, PsbJ, PsbK, PsbL, PsbM, PsbT, PsbX, PsbY, PsbZ, Psb30/Ycf12, peripheral proteins PsbO, CyanoQ (PsbQ), PsbU, PsbV and a large number of cofactors. It forms dimeric complexes.

The protein localises to the cellular thylakoid membrane. A core subunit of photosystem II (PSII), probably helps stabilize the reaction center. The chain is Photosystem II reaction center protein Psb30 from Crocosphaera subtropica (strain ATCC 51142 / BH68) (Cyanothece sp. (strain ATCC 51142)).